A 293-amino-acid polypeptide reads, in one-letter code: MDLGKVITAMVTPIHPEKDKVCKKRIHHLVNHLIKNGSDGLVIAGTTGESPTLSHDEKIKLFRQVIETNDGRAKLIAGTGSNNTAETIAFTKEVAELGGIDAVLIVAPYYNKPNQDGLYAHFAAVSEASDLPVVIYNIPGRSVVNIEPETIIRLAKLPNIVGVKESSGNLDNISKIIAETSDDFQVYSGDDSLTLPILAVGGNGVISVASHVVGNEMQEMIQAFERGEVQKAAQIHRELLPLMNGLFSVPNPAPTKYLLNQQGISVGPVRLPLVDLNAEQGTKLQAILEGLSK.

Thr47 is a binding site for pyruvate. The Proton donor/acceptor role is filled by Tyr136. The Schiff-base intermediate with substrate role is filled by Lys164. Ile206 lines the pyruvate pocket.

The protein belongs to the DapA family. In terms of assembly, homotetramer; dimer of dimers.

The protein localises to the cytoplasm. The catalysed reaction is L-aspartate 4-semialdehyde + pyruvate = (2S,4S)-4-hydroxy-2,3,4,5-tetrahydrodipicolinate + H2O + H(+). It functions in the pathway amino-acid biosynthesis; L-lysine biosynthesis via DAP pathway; (S)-tetrahydrodipicolinate from L-aspartate: step 3/4. In terms of biological role, catalyzes the condensation of (S)-aspartate-beta-semialdehyde [(S)-ASA] and pyruvate to 4-hydroxy-tetrahydrodipicolinate (HTPA). In Listeria monocytogenes serotype 4b (strain CLIP80459), this protein is 4-hydroxy-tetrahydrodipicolinate synthase.